We begin with the raw amino-acid sequence, 162 residues long: MADTNRAVEKLQGKFEASILEVKQDRGDWIVTVKKEDIVAVLAFLKQECKFDMLTDVTAVDYLGKAADRFMMVYQLTSVPFKDRLRIKAPVAEADCVIGSATQVYGSANWLEREVFDLFGIRFDKHPDLRRILMTPDWEGHPLRKDYPLQGPGREPYKGRLS.

The protein belongs to the complex I 30 kDa subunit family. As to quaternary structure, NDH-1 is composed of 14 different subunits. Subunits NuoB, C, D, E, F, and G constitute the peripheral sector of the complex.

The protein resides in the cell inner membrane. It carries out the reaction a quinone + NADH + 5 H(+)(in) = a quinol + NAD(+) + 4 H(+)(out). Functionally, NDH-1 shuttles electrons from NADH, via FMN and iron-sulfur (Fe-S) centers, to quinones in the respiratory chain. The immediate electron acceptor for the enzyme in this species is believed to be ubiquinone. Couples the redox reaction to proton translocation (for every two electrons transferred, four hydrogen ions are translocated across the cytoplasmic membrane), and thus conserves the redox energy in a proton gradient. The protein is NADH-quinone oxidoreductase subunit C of Trichlorobacter lovleyi (strain ATCC BAA-1151 / DSM 17278 / SZ) (Geobacter lovleyi).